The primary structure comprises 520 residues: GMP synthase [glutamine-hydrolyzing] (520 aa).

The region spanning 12–205 is the Glutamine amidotransferase type-1 domain; that stretch reads KIIVLDYGSQ…AIFICGARGD (194 aa). Cys-89 functions as the Nucleophile in the catalytic mechanism. Catalysis depends on residues His-179 and Glu-181. The GMPS ATP-PPase domain occupies 206–395; it reads WSMDNFIDMQ…LGMPENIVWR (190 aa). 233 to 239 is an ATP binding site; sequence SGGVDSS.

As to quaternary structure, homodimer.

The catalysed reaction is XMP + L-glutamine + ATP + H2O = GMP + L-glutamate + AMP + diphosphate + 2 H(+). It participates in purine metabolism; GMP biosynthesis; GMP from XMP (L-Gln route): step 1/1. Its function is as follows. Catalyzes the synthesis of GMP from XMP. The protein is GMP synthase [glutamine-hydrolyzing] of Streptococcus uberis (strain ATCC BAA-854 / 0140J).